Here is a 330-residue protein sequence, read N- to C-terminus: Phosphate acyltransferase (330 aa).

This sequence belongs to the PlsX family. In terms of assembly, homodimer. Probably interacts with PlsY.

The protein localises to the cytoplasm. The catalysed reaction is a fatty acyl-[ACP] + phosphate = an acyl phosphate + holo-[ACP]. Its pathway is lipid metabolism; phospholipid metabolism. Functionally, catalyzes the reversible formation of acyl-phosphate (acyl-PO(4)) from acyl-[acyl-carrier-protein] (acyl-ACP). This enzyme utilizes acyl-ACP as fatty acyl donor, but not acyl-CoA. The chain is Phosphate acyltransferase from Lactobacillus delbrueckii subsp. bulgaricus (strain ATCC 11842 / DSM 20081 / BCRC 10696 / JCM 1002 / NBRC 13953 / NCIMB 11778 / NCTC 12712 / WDCM 00102 / Lb 14).